The chain runs to 292 residues: MSTISAALVMQLRERTGAGMMECKKFLIATNGDIEQAIIEMRKAGQAKADKKADRVAAEGIIVIARSSDERTAVMLEINSETDFVARDENFTNFANAVADVALTSLPKNIEDLSNQALSSGATVEQARQELVAKIGENIKLRRLEKMHCDGVIGYYLHGSRIGVMVALKNGSEALAKDIAMHVAASKPMVVSRDQVPAEAIENEREIFTAQAKESGKPQEIIDKMIDGRINKFIDEVSLLGQPYVKDPNIKVGQLLKEKNAEVISFVRYEVGEGIEKKEDNFVEEVMAQVRT.

An involved in Mg(2+) ion dislocation from EF-Tu region spans residues 82–85 (TDFV).

This sequence belongs to the EF-Ts family.

The protein resides in the cytoplasm. Its function is as follows. Associates with the EF-Tu.GDP complex and induces the exchange of GDP to GTP. It remains bound to the aminoacyl-tRNA.EF-Tu.GTP complex up to the GTP hydrolysis stage on the ribosome. This is Elongation factor Ts from Legionella pneumophila subsp. pneumophila (strain Philadelphia 1 / ATCC 33152 / DSM 7513).